A 557-amino-acid polypeptide reads, in one-letter code: MTMLKDPSKKYRAFPTIDLPDRTWPSKTITQAPIWCSSDLRDGNQSLIEPMDSEKKLRFWKTLVQVGVKEIEASFPSASQTDFDFVRTLIEDGHIPDDTTIQVLTQAREDLIARTFESLRGAKKAIVHLYNATCPSFRRIVFNQDKQGVKDIAVNAAKLFVKYAAQQPDTHWTFQYSPETFSATELEFAKEVCDAVIEVWNPTPEHKIILNLPATVEVATPNVYADQIEWFCRNINRRDSVIISLHTHNDRGTGIAATELGLMAGADRAEGCLFGNGERTGNVDLVTLALNLYTQGIDPQLDFSDIDGVRKVVEECNQLPVHPRHPYVGDLVHTAFSGSHQDAIRKGFAKQQEGELWEVPYLPIDPADIGRSYEAVIRVNSQSGKGGITYLLEQEYGISLPRRMQIEFSQVVQGETDRLGLEMTAEQIYKLLQKEYLQANAPYALVSHRLQEENGSSHVQVEVSGEGETTLHWHGKGNGALEALVAGLPVNVEIMDYNEHAIGAGTNAKAAAYIELRVAGGRPVHGVGIDENITTASFKALFSALNRSLSQQQAKAA.

One can recognise a Pyruvate carboxyltransferase domain in the interval 33 to 307 (PIWCSSDLRD…DPQLDFSDID (275 aa)). Mg(2+)-binding residues include Asp-42, His-246, His-248, and Asn-282. Residues 439–557 (ANAPYALVSH…SLSQQQAKAA (119 aa)) form a regulatory domain region.

Belongs to the alpha-IPM synthase/homocitrate synthase family. LeuA type 2 subfamily. In terms of assembly, homodimer. Requires Mg(2+) as cofactor.

The protein localises to the cytoplasm. The catalysed reaction is 3-methyl-2-oxobutanoate + acetyl-CoA + H2O = (2S)-2-isopropylmalate + CoA + H(+). It participates in amino-acid biosynthesis; L-leucine biosynthesis; L-leucine from 3-methyl-2-oxobutanoate: step 1/4. Functionally, catalyzes the condensation of the acetyl group of acetyl-CoA with 3-methyl-2-oxobutanoate (2-ketoisovalerate) to form 3-carboxy-3-hydroxy-4-methylpentanoate (2-isopropylmalate). This Pseudomonas entomophila (strain L48) protein is 2-isopropylmalate synthase.